An 87-amino-acid chain; its full sequence is MSLIELLFGRKQKTATVARDRLQIIIAQERAQEGQTPDYLPTLRKELMEVLSKYVNVSLDNIRISQEKQDGMDVLELNITLPEQKKV.

Belongs to the MinE family.

In terms of biological role, prevents the cell division inhibition by proteins MinC and MinD at internal division sites while permitting inhibition at polar sites. This ensures cell division at the proper site by restricting the formation of a division septum at the midpoint of the long axis of the cell. The polypeptide is Cell division topological specificity factor (Neisseria gonorrhoeae (strain ATCC 700825 / FA 1090)).